A 308-amino-acid polypeptide reads, in one-letter code: Ornithine carbamoyltransferase (308 aa).

Carbamoyl phosphate contacts are provided by residues arginine 103 and histidine 130–glutamine 133. L-ornithine contacts are provided by residues asparagine 162, aspartate 221, and serine 225–methionine 226. Residues cysteine 261–leucine 262 and arginine 289 contribute to the carbamoyl phosphate site.

Belongs to the aspartate/ornithine carbamoyltransferase superfamily. OTCase family.

The protein resides in the cytoplasm. The catalysed reaction is carbamoyl phosphate + L-ornithine = L-citrulline + phosphate + H(+). It participates in amino-acid biosynthesis; L-arginine biosynthesis; L-arginine from L-ornithine and carbamoyl phosphate: step 1/3. In terms of biological role, reversibly catalyzes the transfer of the carbamoyl group from carbamoyl phosphate (CP) to the N(epsilon) atom of ornithine (ORN) to produce L-citrulline. The polypeptide is Ornithine carbamoyltransferase (Deinococcus radiodurans (strain ATCC 13939 / DSM 20539 / JCM 16871 / CCUG 27074 / LMG 4051 / NBRC 15346 / NCIMB 9279 / VKM B-1422 / R1)).